We begin with the raw amino-acid sequence, 373 residues long: Alpha-1,3-mannosyl-glycoprotein 4-beta-N-acetylglucosaminyltransferase-like protein MGAT4D (373 aa).

Over 1–5 the chain is Cytoplasmic; the sequence is MKAKN. A helical; Signal-anchor for type II membrane protein transmembrane segment spans residues 6–26; the sequence is VNLLFAFVAVLLFGFSCFCIS. Topologically, residues 27-373 are lumenal; that stretch reads RMNQTNNQLI…REQHLKDNYY (347 aa). Asn-29, Asn-54, and Asn-144 each carry an N-linked (GlcNAc...) asparagine glycan.

This sequence belongs to the glycosyltransferase 54 family. Isoform 2 self-associates; specifically in the endoplasmic reticulum prior to its translocation to the Golgi. Isoform 1 and isoform 2 interact with MGAT1, MGAT3 and MAN2A2; isoform 2 interacts specifically with MGAT1 in the Golgi. Post-translationally, isoform 2 is N-glycosylated; consisting of high-mannose and/or hybrid glycans. In terms of tissue distribution, isoform 1 and isoform 2 are specifically expressed in testis. Isoform 2 is expressed in spermatocytes but not in spermatids. Isoform 1 is expressed in spermatids.

The protein resides in the endoplasmic reticulum membrane. It localises to the endoplasmic reticulum-Golgi intermediate compartment membrane. The protein localises to the golgi apparatus membrane. May play a role in male spermatogenesis. In vitro acts as inhibitor of MGAT1 activity causing cell surface proteins to carry mainly high mannose N-glycans. The function is mediated by its lumenal domain and occurs specifically in the Golgi. A catalytic glucosyltransferase activity is not detected. May be involved in regulation of Sertoli-germ cell interactions during specific stages of spermatogenesis. This is Alpha-1,3-mannosyl-glycoprotein 4-beta-N-acetylglucosaminyltransferase-like protein MGAT4D from Mus musculus (Mouse).